A 350-amino-acid polypeptide reads, in one-letter code: tRNA uridine(34) hydroxylase (350 aa).

One can recognise a Rhodanese domain in the interval 146-240 (DDPDAVFIDM…YARKAREQGL (95 aa)). The active-site Cysteine persulfide intermediate is the cysteine 200. Residues 314 to 350 (PEEEQRRRRAGRENGNKIFNKSRGRLNTQLGIPDPAE) are disordered. Basic and acidic residues predominate over residues 316-328 (EEQRRRRAGRENG).

It belongs to the TrhO family.

It carries out the reaction uridine(34) in tRNA + AH2 + O2 = 5-hydroxyuridine(34) in tRNA + A + H2O. Its function is as follows. Catalyzes oxygen-dependent 5-hydroxyuridine (ho5U) modification at position 34 in tRNAs. The polypeptide is tRNA uridine(34) hydroxylase (Citrobacter koseri (strain ATCC BAA-895 / CDC 4225-83 / SGSC4696)).